An 81-amino-acid chain; its full sequence is Putative membrane protein insertion efficiency factor (81 aa).

A disordered region spans residues 60 to 81 (WNPGGYDPVPTHNTSNSSPMAE). Polar residues predominate over residues 70–81 (THNTSNSSPMAE).

This sequence belongs to the UPF0161 family.

The protein localises to the cell inner membrane. Functionally, could be involved in insertion of integral membrane proteins into the membrane. This Stutzerimonas stutzeri (strain A1501) (Pseudomonas stutzeri) protein is Putative membrane protein insertion efficiency factor.